The following is a 242-amino-acid chain: MSSHQKLYEGKAKILYTTDDPEILLTYFKDDATAFNAQKKGTITGKGKINCTISSHIFKLLETNEIPTHFIDCPASDKMRVRRVKILPIEVIVRNIAAGSLCRQTLLTEGTILKFPLVEYCYKNDTLQDPLLTRDRLLILELATPEQLEQIRTFAVKINDILINFFNQCQITLVDFKIEFGLDKHENLILADEISPDSCRLWDQYQTDPNQRVMDKDRFRRDLGKVETGYQQVLERILAHQG.

This sequence belongs to the SAICAR synthetase family.

The catalysed reaction is 5-amino-1-(5-phospho-D-ribosyl)imidazole-4-carboxylate + L-aspartate + ATP = (2S)-2-[5-amino-1-(5-phospho-beta-D-ribosyl)imidazole-4-carboxamido]succinate + ADP + phosphate + 2 H(+). It functions in the pathway purine metabolism; IMP biosynthesis via de novo pathway; 5-amino-1-(5-phospho-D-ribosyl)imidazole-4-carboxamide from 5-amino-1-(5-phospho-D-ribosyl)imidazole-4-carboxylate: step 1/2. In Trichodesmium erythraeum (strain IMS101), this protein is Phosphoribosylaminoimidazole-succinocarboxamide synthase.